Consider the following 253-residue polypeptide: Testis-expressed protein 47 (253 aa).

This Rattus norvegicus (Rat) protein is Testis-expressed protein 47.